We begin with the raw amino-acid sequence, 628 residues long: MLKFQETAKCVGRRPTVIPMYPTALIARRYVLQQKLGSGSFGTVYLVSDKKAKPGEELKVLKEISVGELNPNETVQANVEAQLLSRLHHPAIVRFHASFMEQETFCIITEYCEGRDLDYRIQEYKEAGKVFAENQIVEWFIQLLLGVDYMHERRILHRDLKSKNIFLKNNLLKIGDFGVSRLLMGSCELATTLTGTPHYMSPEALKHQGYDAKSDIWSLACILYEMCCLDHAFAGSSFLSVVLNIVEGKTPSLPDRYPRELNTIMERMLNKSPSLRPSAADILKAPYMEEQLQLLMCKYPEMTLEDKNSVCQKEAAHTINAVQKKLHLQTLQALSDTQKTTPRERMWLRKLQAADERARRLKKIAEENYKENDKRMQALRSRNVGSVHAHVLHELDERTLESLPEPQSLPCLDLDELEPSLEDTIVDLGHYEIPEDPLVAEQYYSDVFDSCSEDSEEQEEEMIFSEAGGDTKEEESPSVYRTNQQDSDTAALVGCLEHVLGYTSLDTKTITNAVTDMSPGPMVFNSAVARTKMKRMKESAVQKLGMETFEEVYDYLKRARHQNAREAEIWEHLETVVPRASDCFEVDQLLYFEELLLTMEGKEPSLQNLPCEAAQKKPVKGTHFCDNP.

The Protein kinase domain occupies 30–288; it reads YVLQQKLGSG…AADILKAPYM (259 aa). Residues 36–44 and K62 each bind ATP; that span reads LGSGSFGTV. D159 (proton acceptor) is an active-site residue. The residue at position 274 (S274) is a Phosphoserine; by CHEK1. The stretch at 347 to 385 forms a coiled coil; it reads WLRKLQAADERARRLKKIAEENYKENDKRMQALRSRNVG. A compositionally biased stretch (acidic residues) spans 452 to 463; it reads SEDSEEQEEEMI. Positions 452–475 are disordered; that stretch reads SEDSEEQEEEMIFSEAGGDTKEEE.

Belongs to the protein kinase superfamily. NEK Ser/Thr protein kinase family. NIMA subfamily. As to quaternary structure, interacts with NEK2. Mn(2+) serves as cofactor. The cofactor is Mg(2+). Post-translationally, phosphorylated by NEK2. Phosphorylation at Ser-274 is important for its activation.

Its subcellular location is the nucleus. The protein localises to the nucleolus. It catalyses the reaction L-seryl-[protein] + ATP = O-phospho-L-seryl-[protein] + ADP + H(+). The enzyme catalyses L-threonyl-[protein] + ATP = O-phospho-L-threonyl-[protein] + ADP + H(+). Autorepressed by intramolecular binding of the C-terminus which dissociates following phosphorylation by NEK2. Activated in response to DNA damage. Inhibited by zinc. Its function is as follows. Protein kinase which plays an important role in the G2/M checkpoint response to DNA damage. Controls degradation of CDC25A by directly phosphorylating it on residues whose phosphorylation is required for BTRC-mediated polyubiquitination and degradation. This Mus musculus (Mouse) protein is Serine/threonine-protein kinase Nek11.